The chain runs to 356 residues: uncharacterized protein (356 aa).

It belongs to the NAD(P)-dependent epimerase/dehydratase family. NAD(+) is required as a cofactor. NADP(+) serves as cofactor.

Its function is as follows. Putative nucleotide sugar epimerase/dehydrogenase. This is an uncharacterized protein from Sinorhizobium fredii (strain NBRC 101917 / NGR234).